The following is a 307-amino-acid chain: Tyrosine recombinase XerC (307 aa).

The region spanning E9–V95 is the Core-binding (CB) domain. In terms of domain architecture, Tyr recombinase spans H116–D296. Residues R155, K179, H248, R251, and H274 contribute to the active site. The O-(3'-phospho-DNA)-tyrosine intermediate role is filled by Y283.

Belongs to the 'phage' integrase family. XerC subfamily. Forms a cyclic heterotetrameric complex composed of two molecules of XerC and two molecules of XerD, in which XerC interacts with XerD via its C-terminal region, XerD interacts with XerC via its C-terminal region and so on.

The protein localises to the cytoplasm. With respect to regulation, ftsK may regulate the catalytic switch between XerC and XerD in the heterotetrameric complex during the two steps of the recombination process. Site-specific tyrosine recombinase, which acts by catalyzing the cutting and rejoining of the recombining DNA molecules. Binds cooperatively to specific DNA consensus sequences that are separated from XerD binding sites by a short central region, forming the heterotetrameric XerC-XerD complex that recombines DNA substrates. The complex is essential to convert dimers of the bacterial chromosome into monomers to permit their segregation at cell division. It also contributes to the segregational stability of plasmids. In the complex XerC specifically exchanges the top DNA strands. The chain is Tyrosine recombinase XerC from Proteus mirabilis.